The chain runs to 434 residues: Mitochondrial distribution and morphology protein 12 (434 aa).

One can recognise an SMP-LTD domain in the interval 1 to 434 (MSIDIDWERA…VYPSFWTFLV (434 aa)). A compositionally biased stretch (acidic residues) spans 70–83 (YEEDDNENFSESSE). Disordered regions lie at residues 70-141 (YEED…LRSP) and 181-277 (TPLG…LPPR). Over residues 86-97 (SPTREPVDRYGS) the composition is skewed to basic and acidic residues. Residues 215-237 (SAQSRPSTANTGNTLLSRGSMSS) show a composition bias toward polar residues.

The protein belongs to the MDM12 family. In terms of assembly, component of the ER-mitochondria encounter structure (ERMES) or MDM complex, composed of MMM1, MDM10, MDM12 and MDM34. An MMM1 homodimer associates with one molecule of MDM12 on each side in a pairwise head-to-tail manner, and the SMP-LTD domains of MMM1 and MDM12 generate a continuous hydrophobic tunnel for phospholipid trafficking.

The protein localises to the mitochondrion outer membrane. Its subcellular location is the endoplasmic reticulum membrane. Its function is as follows. Component of the ERMES/MDM complex, which serves as a molecular tether to connect the endoplasmic reticulum (ER) and mitochondria. Components of this complex are involved in the control of mitochondrial shape and protein biogenesis, and function in nonvesicular lipid trafficking between the ER and mitochondria. MDM12 is required for the interaction of the ER-resident membrane protein MMM1 and the outer mitochondrial membrane-resident beta-barrel protein MDM10. The MDM12-MMM1 subcomplex functions in the major beta-barrel assembly pathway that is responsible for biogenesis of all mitochondrial outer membrane beta-barrel proteins, and acts in a late step after the SAM complex. The MDM10-MDM12-MMM1 subcomplex further acts in the TOM40-specific pathway after the action of the MDM12-MMM1 complex. Essential for establishing and maintaining the structure of mitochondria and maintenance of mtDNA nucleoids. The chain is Mitochondrial distribution and morphology protein 12 from Ajellomyces dermatitidis (strain ER-3 / ATCC MYA-2586) (Blastomyces dermatitidis).